A 59-amino-acid chain; its full sequence is uncharacterized protein (59 aa).

The N-terminal stretch at 1 to 17 (MIASIWYAELGCASAIA) is a signal peptide.

This is an uncharacterized protein from Rickettsia prowazekii (strain Madrid E).